We begin with the raw amino-acid sequence, 85 residues long: Large ribosomal subunit protein bL27 (85 aa).

The interval 1-20 (MAHKKAGGSTRNGRDSEAKR) is disordered.

It belongs to the bacterial ribosomal protein bL27 family.

This is Large ribosomal subunit protein bL27 from Citrobacter koseri (strain ATCC BAA-895 / CDC 4225-83 / SGSC4696).